A 499-amino-acid chain; its full sequence is Transcriptional regulator sdnM (499 aa).

It is found in the nucleus. Its pathway is antibiotic biosynthesis. Functionally, transcriptional regulator; part of the gene cluster that mediates the biosynthesis of sordarin and hypoxysordarin, glycoside antibiotics with a unique tetracyclic diterpene aglycone structure. First, the geranylgeranyl diphosphate synthase sdnC constructs GGDP from farnesyl diphosphate and isopentenyl diphosphate. The diterpene cyclase sdnA then catalyzes the cyclization of GGDP to afford cycloaraneosene. Cycloaraneosene is then hydroxylated four times by the putative cytochrome P450 monooxygenases sdnB, sdnE, sdnF and sdnH to give a hydroxylated cycloaraneosene derivative such as cycloaraneosene-8,9,13,19-tetraol. Although the order of the hydroxylations is unclear, at least C8, C9 and C13 of the cycloaraneosene skeleton are hydroxylated before the sordaricin formation. Dehydration of the 13-hydroxy group of the hydroxylated cycloaraneosene derivative might be catalyzed by an unassigned hypothetical protein such as sdnG and sdnP to construct the cyclopentadiene moiety. The FAD-dependent oxidoreductase sdnN is proposed to catalyze the oxidation at C9 of the hydroxylated cycloaraneosene derivative and also catalyze the Baeyer-Villiger oxidation to give the lactone intermediate. The presumed lactone intermediate would be hydrolyzed to give an acrolein moiety and a carboxylate moiety. Then, [4+2]cycloaddition would occur between the acrolein moiety and the cyclopentadiene moiety to give sordaricin. SdnN might also be involved in the [4+2]cycloaddition after the hypothesized oxidation to accommodate the oxidized product and prompt the [4+2]cycloaddition. GDP-6-deoxy-D-altrose may be biosynthesized from GDP-D-mannose by the putative GDP-mannose-4,6-dehydratase sdnI and the short-chain dehydrogenase sdnK. The glycosyltransferase sdnJ catalyzes the attachment of 6-deoxy-D-altrose onto the 19-hydroxy group of sordaricin to give 4'-O-demethylsordarin. The methyltransferase sdnD would complete the biosynthesis of sordarin. Sordarin can be further modified into hypoxysordarin. The unique acyl chain at the 3'-hydroxy group of hypoxysordarin would be constructed by an iterative type I PKS sdnO and the trans-acting polyketide methyltransferase sdnL. SdnL would be responsible for the introduction of an alpha-methyl group of the polyketide chain. Alternatively, the beta-lactamase-like protein sdnR might be responsible for the cleavage and transfer of the polyketide chain from the PKS sdnO to sordarin. Two putative cytochrome P450 monooxygenases, sdnQ and sdnT, might catalyze the epoxidations of the polyketide chain to complete the biosynthesis of hypoxysordarin. Transcriptional regulators sdnM and sdnS are presumably encoded for the transcriptional regulation of the expression of the sdn gene cluster. This is Transcriptional regulator sdnM from Sordaria araneosa (Pleurage araneosa).